We begin with the raw amino-acid sequence, 346 residues long: Holliday junction branch migration complex subunit RuvB (346 aa).

The tract at residues 1–182 is large ATPase domain (RuvB-L); sequence MSERLVTSNE…FGVLCSMEYY (182 aa). ATP contacts are provided by residues Leu21, Arg22, Gly63, Lys66, Thr67, Thr68, 129–131, Arg172, Tyr182, and Arg219; that span reads EDY. Thr67 contacts Mg(2+). The segment at 183–253 is small ATPAse domain (RuvB-S); that stretch reads TDEQLKEIII…AAKKSLEILE (71 aa). Positions 256–346 are head domain (RuvB-H); it reads GEGFDRIDNK…DSKQCTLFEK (91 aa). Residues Arg311 and Arg316 each contribute to the DNA site.

Belongs to the RuvB family. As to quaternary structure, homohexamer. Forms an RuvA(8)-RuvB(12)-Holliday junction (HJ) complex. HJ DNA is sandwiched between 2 RuvA tetramers; dsDNA enters through RuvA and exits via RuvB. An RuvB hexamer assembles on each DNA strand where it exits the tetramer. Each RuvB hexamer is contacted by two RuvA subunits (via domain III) on 2 adjacent RuvB subunits; this complex drives branch migration. In the full resolvosome a probable DNA-RuvA(4)-RuvB(12)-RuvC(2) complex forms which resolves the HJ.

Its subcellular location is the cytoplasm. It catalyses the reaction ATP + H2O = ADP + phosphate + H(+). In terms of biological role, the RuvA-RuvB-RuvC complex processes Holliday junction (HJ) DNA during genetic recombination and DNA repair, while the RuvA-RuvB complex plays an important role in the rescue of blocked DNA replication forks via replication fork reversal (RFR). RuvA specifically binds to HJ cruciform DNA, conferring on it an open structure. The RuvB hexamer acts as an ATP-dependent pump, pulling dsDNA into and through the RuvAB complex. RuvB forms 2 homohexamers on either side of HJ DNA bound by 1 or 2 RuvA tetramers; 4 subunits per hexamer contact DNA at a time. Coordinated motions by a converter formed by DNA-disengaged RuvB subunits stimulates ATP hydrolysis and nucleotide exchange. Immobilization of the converter enables RuvB to convert the ATP-contained energy into a lever motion, pulling 2 nucleotides of DNA out of the RuvA tetramer per ATP hydrolyzed, thus driving DNA branch migration. The RuvB motors rotate together with the DNA substrate, which together with the progressing nucleotide cycle form the mechanistic basis for DNA recombination by continuous HJ branch migration. Branch migration allows RuvC to scan DNA until it finds its consensus sequence, where it cleaves and resolves cruciform DNA. The chain is Holliday junction branch migration complex subunit RuvB from Clostridium perfringens (strain ATCC 13124 / DSM 756 / JCM 1290 / NCIMB 6125 / NCTC 8237 / Type A).